The chain runs to 279 residues: Diaminopimelate epimerase 1 (279 aa).

The substrate site is built by Asn13 and Asn66. Cys75 serves as the catalytic Proton donor. Substrate-binding positions include 76–77 (GN), Asn164, Asn197, and 215–216 (ER). Catalysis depends on Cys224, which acts as the Proton acceptor. 225 to 226 (GT) contributes to the substrate binding site.

This sequence belongs to the diaminopimelate epimerase family. In terms of assembly, homodimer.

It localises to the cytoplasm. The enzyme catalyses (2S,6S)-2,6-diaminopimelate = meso-2,6-diaminopimelate. The protein operates within amino-acid biosynthesis; L-lysine biosynthesis via DAP pathway; DL-2,6-diaminopimelate from LL-2,6-diaminopimelate: step 1/1. Its function is as follows. Catalyzes the stereoinversion of LL-2,6-diaminopimelate (L,L-DAP) to meso-diaminopimelate (meso-DAP), a precursor of L-lysine and an essential component of the bacterial peptidoglycan. The protein is Diaminopimelate epimerase 1 of Nostoc sp. (strain PCC 7120 / SAG 25.82 / UTEX 2576).